A 1021-amino-acid chain; its full sequence is Ephrin type-B receptor 6 (1021 aa).

The first 31 residues, 1–31 (MATEGAAQLGNRVAGMVCSLWVLLLVSSVLA), serve as a signal peptide directing secretion. Residues 32-594 (LEEVLLDTTG…LSSQLPERLS (563 aa)) lie on the Extracellular side of the membrane. An Eph LBD domain is found at 33-237 (EEVLLDTTGE…FSYTCPAVLR (205 aa)). Residues 163–182 (SFPSSSSSSSSSSSAAWAVG) are disordered. Low complexity predominate over residues 166-176 (SSSSSSSSSSS). 2 Fibronectin type-III domains span residues 369–486 (PPSA…TSHE) and 487–582 (VPSA…TLPQ). N480 is a glycosylation site (N-linked (GlcNAc...) asparagine). The chain crosses the membrane as a helical span at residues 595–615 (LVIGSILGALAFLLLAAITVL). Over 616 to 1021 (AVVFQRKRRG…HLRQQGSVEV (406 aa)) the chain is Cytoplasmic. The region spanning 670–919 (IKIEEVIGTG…QLVAAFDKMI (250 aa)) is the Protein kinase domain. 676-684 (IGTGSFGEV) serves as a coordination point for ATP. The 65-residue stretch at 948 to 1012 (PCLDSPQAWL…LHHIQLLQQH (65 aa)) folds into the SAM domain. The short motif at 1019–1021 (VEV) is the PDZ-binding element.

This sequence belongs to the protein kinase superfamily. Tyr protein kinase family. Ephrin receptor subfamily. Interacts with CBL and EPHB1. Interacts with FYN; this interaction takes place in a ligand-independent manner. Ligand-binding increases phosphorylation on tyrosine residues. Phosphorylation on tyrosine residues is mediated by transphosphorylation by the catalytically active EPHB1 in a ligand-independent manner. Tyrosine phosphorylation of the receptor may act as a switch on the functional transition from cell adhesion/attraction to de-adhesion/repulsion. As to expression, expressed in brain. Expressed in non invasive breast carcinoma cell lines (at protein level). Strong expression in brain and pancreas, and weak expression in other tissues, such as heart, placenta, lung, liver, skeletal muscle and kidney. Expressed in breast non invasive tumors but not in metastatic lesions. Isoform 3 is expressed in cell lines of glioblastomas, anaplastic astrocytomas, gliosarcomas and astrocytomas. Isoform 3 is not detected in normal tissues.

The protein resides in the membrane. The protein localises to the secreted. In terms of biological role, kinase-defective receptor for members of the ephrin-B family. Binds to ephrin-B1 and ephrin-B2. Modulates cell adhesion and migration by exerting both positive and negative effects upon stimulation with ephrin-B2. Inhibits JNK activation, T-cell receptor-induced IL-2 secretion and CD25 expression upon stimulation with ephrin-B2. This chain is Ephrin type-B receptor 6 (EPHB6), found in Homo sapiens (Human).